The primary structure comprises 495 residues: Putative FAD-containing monooxygenase MymA (495 aa).

FAD contacts are provided by residues Ser-15, Glu-36, Trp-45, 56-57 (DS), and Val-104.

It belongs to the FAD-binding monooxygenase family. FAD is required as a cofactor.

In terms of biological role, required for maintaining the appropriate mycolic acid composition and permeability of the envelope on its exposure to acidic pH. This Mycobacterium tuberculosis (strain CDC 1551 / Oshkosh) protein is Putative FAD-containing monooxygenase MymA (mymA).